Here is a 287-residue protein sequence, read N- to C-terminus: 4-diphosphocytidyl-2-C-methyl-D-erythritol kinase (287 aa).

Lys-12 is an active-site residue. 95-105 (PAQAGMGGGSS) lines the ATP pocket. The active site involves Asp-137.

Belongs to the GHMP kinase family. IspE subfamily.

It carries out the reaction 4-CDP-2-C-methyl-D-erythritol + ATP = 4-CDP-2-C-methyl-D-erythritol 2-phosphate + ADP + H(+). Its pathway is isoprenoid biosynthesis; isopentenyl diphosphate biosynthesis via DXP pathway; isopentenyl diphosphate from 1-deoxy-D-xylulose 5-phosphate: step 3/6. Functionally, catalyzes the phosphorylation of the position 2 hydroxy group of 4-diphosphocytidyl-2C-methyl-D-erythritol. This is 4-diphosphocytidyl-2-C-methyl-D-erythritol kinase from Delftia acidovorans (strain DSM 14801 / SPH-1).